A 400-amino-acid polypeptide reads, in one-letter code: MRTIDDLQVAGHRVLVRSDLNVPLDRSGDTPRITDDGRVRASVPTIAALLDRGARVIVTSHLGRPKGEPDPRYSLEPVAARLGELLGRPVAFAGDGTGDIAGAHAREVVAGLGDGEVALLENLRFSPGETSKDAVTRASFADALAALAEFYVGDAFGAVHRAHASVADVPKRLPHAAGRLVLTELDVLRRLSADPARPYAVVLGGSKVSDKLGVIRALLPKVDALLVGGGMCFTFLAALGHGVGGSLLEAEMIDTCKALLAEGGDRIVLPTDVVVADRFAADAQTAVVPADGIGDGWLGLDIGPASTALFAGRLDGAATVFWNGPMGVFELAPFAAGTRGVAKAIAAGDGFSVVGGGDSAAAVRTLGIPEDAFSHISTGGGASLEYLEGKTLPGLAALDV.

Substrate is bound by residues 19–21, Arg38, 61–64, Arg124, and Arg161; these read DLN and HLGR. ATP is bound by residues Lys211, Gly299, Glu330, and 356 to 359; that span reads GGDS.

The protein belongs to the phosphoglycerate kinase family. In terms of assembly, monomer.

The protein resides in the cytoplasm. It catalyses the reaction (2R)-3-phosphoglycerate + ATP = (2R)-3-phospho-glyceroyl phosphate + ADP. The protein operates within carbohydrate degradation; glycolysis; pyruvate from D-glyceraldehyde 3-phosphate: step 2/5. This is Phosphoglycerate kinase from Frankia alni (strain DSM 45986 / CECT 9034 / ACN14a).